The primary structure comprises 271 residues: Ribosomal RNA small subunit methyltransferase A (271 aa).

Residues Asn28, Leu30, Gly54, Glu75, Asp99, and Asn117 each contribute to the S-adenosyl-L-methionine site.

It belongs to the class I-like SAM-binding methyltransferase superfamily. rRNA adenine N(6)-methyltransferase family. RsmA subfamily.

It is found in the cytoplasm. It catalyses the reaction adenosine(1518)/adenosine(1519) in 16S rRNA + 4 S-adenosyl-L-methionine = N(6)-dimethyladenosine(1518)/N(6)-dimethyladenosine(1519) in 16S rRNA + 4 S-adenosyl-L-homocysteine + 4 H(+). Its function is as follows. Specifically dimethylates two adjacent adenosines (A1518 and A1519) in the loop of a conserved hairpin near the 3'-end of 16S rRNA in the 30S particle. May play a critical role in biogenesis of 30S subunits. In Thermus thermophilus (strain ATCC BAA-163 / DSM 7039 / HB27), this protein is Ribosomal RNA small subunit methyltransferase A.